Consider the following 541-residue polypeptide: Atlastin (541 aa).

The Cytoplasmic portion of the chain corresponds to 1–424 (MGGSAVQVIN…NIFKAARTPA (424 aa)). The GB1/RHD3-type G domain maps to 35–284 (DRFVCVVSVA…LVPMLLAPDN (250 aa)). GDP-binding residues include Arg48, Lys49, Gly50, Lys51, and Ser52. Arg48, Lys49, Gly50, Lys51, Ser52, and Phe53 together coordinate GTP. A Mg(2+)-binding site is contributed by Ser52. Asp121 serves as a coordination point for Mg(2+). Residues Arg192, Asp193, and Val251 each coordinate GDP. GTP-binding residues include Arg192, Asp193, and Val251. Residues 322-413 (MLVATAEANH…FTNYQAHNES (92 aa)) form a 3HB (three-helix bundle) domain region. Positions 414-422 (KNIFKAART) are linker. The chain crosses the membrane as a helical span at residues 425–445 (VYFACAVIMYILSGIFGLVGL). The Lumenal portion of the chain corresponds to 446 to 448 (YTF). A helical transmembrane segment spans residues 449–469 (ANFCNLVMGVALLTLALWAYI). Topologically, residues 470–541 (RYSGELSDFG…NASNGKVKRS (72 aa)) are cytoplasmic. The residue at position 514 (Thr514) is a Phosphothreonine.

The protein belongs to the TRAFAC class dynamin-like GTPase superfamily. GB1/RHD3 GTPase family. GB1 subfamily. In terms of assembly, monomeric and homodimeric. The homodimer, transiently formed by two molecules on opposing membranes, is the active form mediating ER membrane fusion. Interacts with spas; interaction may regulate microtubule dynamics. Ubiquitously expressed.

The protein localises to the endoplasmic reticulum membrane. It is found in the golgi apparatus membrane. The catalysed reaction is GTP + H2O = GDP + phosphate + H(+). Its function is as follows. Membrane-anchored GTPase that mediates the GTP-dependent fusion of endoplasmic reticulum (ER) membranes, maintaining the continuous ER network. It facilitates the formation of three-way junctions where ER tubules intersect. Two atlastin-1 on neighboring ER tubules bind GTP and form loose homodimers through the GB1/RHD3-type G domains and 3HB regions. Upon GTP hydrolysis, the 3HB regions tighten, pulling the membranes together to drive their fusion. After fusion, the homodimer disassembles upon release of inorganic phosphate (Pi). Subsequently, GDP dissociates, resetting the monomers to a conformation ready for a new fusion cycle. May also regulate more or less directly Golgi biogenesis. May also regulate microtubule polymerization and Golgi biogenesis. Required for dopaminergic neurons survival and the growth of muscles and synapses at neuromuscular junctions. This is Atlastin (atl) from Drosophila melanogaster (Fruit fly).